The primary structure comprises 209 residues: PRA1 family protein E (209 aa).

The disordered stretch occupies residues 1–20 (MNQKPPPYGYGGAGGGGVGP). Over residues 9-19 (GYGGAGGGGVG) the composition is skewed to gly residues. Transmembrane regions (helical) follow at residues 90–110 (IVFLGLIYHPMSMIAFIVVFI), 132–152 (VDDKIVLVLLSLVTVLALVYT), and 155–175 (GENVLVSLIIGLLIVGAHGAF).

It belongs to the PRA1 family. In terms of assembly, interacts with PRA1B1, PRA1B2, PRA1B3, PRA1B4, PRA1B5 and PRA1B6. In terms of tissue distribution, expressed in hypocotyls, roots, lateral roots, columella cells, leaves and shoot apex.

Its subcellular location is the endosome membrane. Functionally, may be involved in both secretory and endocytic intracellular trafficking in the endosomal/prevacuolar compartments. This chain is PRA1 family protein E (PRA1E), found in Arabidopsis thaliana (Mouse-ear cress).